Here is a 707-residue protein sequence, read N- to C-terminus: Leukotoxin export ATP-binding protein LtxB (707 aa).

One can recognise a Peptidase C39 domain in the interval 4-125 (QKNTNLALQA…ERYQSKVILI (122 aa)). Histidine 83 is an active-site residue. 5 helical membrane-spanning segments follow: residues 158–178 (LIVS…FQVV), 191–211 (LNVI…LGGL), 269–289 (ALTS…MWYY), 295–315 (LVVL…SPIL), and 387–407 (AVMV…DLSI). An ABC transmembrane type-1 domain is found at 158–436 (LIVSIFLQIF…LAQIWQDFQQ (279 aa)). Positions 468 to 703 (ISFRNIKFRY…EKGLYSYLHQ (236 aa)) constitute an ABC transporter domain. 502–509 (GRSGSGKS) serves as a coordination point for ATP.

Belongs to the ABC transporter superfamily. Protein-1 exporter (TC 3.A.1.109) family. As to quaternary structure, probably part of a complex composed of LtxB, LtxD and TdeA, which forms a single transport channel across the two membranes.

The protein resides in the cell inner membrane. It carries out the reaction ATP + H2O + proteinSide 1 = ADP + phosphate + proteinSide 2.. In terms of biological role, involved in the export of the LtxA leukotoxin. The polypeptide is Leukotoxin export ATP-binding protein LtxB (Aggregatibacter actinomycetemcomitans (Actinobacillus actinomycetemcomitans)).